Here is a 219-residue protein sequence, read N- to C-terminus: 2-C-methyl-D-erythritol 4-phosphate cytidylyltransferase (219 aa).

This sequence belongs to the IspD/TarI cytidylyltransferase family. IspD subfamily.

The catalysed reaction is 2-C-methyl-D-erythritol 4-phosphate + CTP + H(+) = 4-CDP-2-C-methyl-D-erythritol + diphosphate. Its pathway is isoprenoid biosynthesis; isopentenyl diphosphate biosynthesis via DXP pathway; isopentenyl diphosphate from 1-deoxy-D-xylulose 5-phosphate: step 2/6. Catalyzes the formation of 4-diphosphocytidyl-2-C-methyl-D-erythritol from CTP and 2-C-methyl-D-erythritol 4-phosphate (MEP). The polypeptide is 2-C-methyl-D-erythritol 4-phosphate cytidylyltransferase (Bacteroides thetaiotaomicron (strain ATCC 29148 / DSM 2079 / JCM 5827 / CCUG 10774 / NCTC 10582 / VPI-5482 / E50)).